The following is a 518-amino-acid chain: Serine--tRNA ligase, mitochondrial (518 aa).

The transit peptide at 1–34 directs the protein to the mitochondrion; it reads MAASIVRRLGPLVAGRGLRLRGGCVCNQSFKRSF. N6-acetyllysine is present on lysine 110. Lysine 195 is modified (N6-succinyllysine). 299–301 serves as a coordination point for L-serine; sequence TAE. An ATP-binding site is contributed by 330–332; it reads RAE. Position 337 is an N6-succinyllysine (lysine 337). Valine 345 serves as a coordination point for ATP. An L-serine-binding site is contributed by glutamate 352. 418-421 contacts ATP; that stretch reads EVTS. Threonine 453 is an L-serine binding site. Residues 497 to 518 are disordered; it reads PLQYIGPNQPQKPRLPGQPASS.

This sequence belongs to the class-II aminoacyl-tRNA synthetase family. Type-1 seryl-tRNA synthetase subfamily. Homodimer. The tRNA molecule probably binds across the dimer. In terms of processing, two N-termini starting at positions 35 and 37 have been identified by direct sequencing.

It localises to the mitochondrion matrix. It catalyses the reaction tRNA(Ser) + L-serine + ATP = L-seryl-tRNA(Ser) + AMP + diphosphate + H(+). It carries out the reaction tRNA(Sec) + L-serine + ATP = L-seryl-tRNA(Sec) + AMP + diphosphate + H(+). It functions in the pathway aminoacyl-tRNA biosynthesis; selenocysteinyl-tRNA(Sec) biosynthesis; L-seryl-tRNA(Sec) from L-serine and tRNA(Sec): step 1/1. In terms of biological role, catalyzes the attachment of serine to tRNA(Ser). Is also probably able to aminoacylate tRNA(Sec) with serine, to form the misacylated tRNA L-seryl-tRNA(Sec), which will be further converted into selenocysteinyl-tRNA(Sec). The protein is Serine--tRNA ligase, mitochondrial (SARS2) of Bos taurus (Bovine).